A 275-amino-acid polypeptide reads, in one-letter code: Probable aquaporin NIP7-1 (275 aa).

Residues 1–11 (MNGEARSRVVD) show a composition bias toward basic and acidic residues. A disordered region spans residues 1–26 (MNGEARSRVVDQEAGSTPSTLRDEDH). The next 2 helical transmembrane spans lie at 47–67 (IVMA…GVIS) and 76–96 (VGLL…VYSI). The NPA 1 motif lies at 105-107 (NPS). 3 helical membrane passes run 127 to 147 (ITAQ…VYGV), 161 to 181 (VSAF…ASAL), and 192 to 212 (LTGF…GPIS). The short motif at 217-219 (NPA) is the NPA 2 element. A helical membrane pass occupies residues 231-251 (FEDLWIYMTAPVIGAIIGVLT). Residue S272 is modified to Phosphoserine.

Belongs to the MIP/aquaporin (TC 1.A.8) family. NIP (TC 1.A.8.12) subfamily. In terms of tissue distribution, expressed in floral buds.

The protein localises to the membrane. In terms of biological role, aquaporins facilitate the transport of water and small neutral solutes across cell membranes. This Arabidopsis thaliana (Mouse-ear cress) protein is Probable aquaporin NIP7-1 (NIP7-1).